A 305-amino-acid polypeptide reads, in one-letter code: UDP-3-O-acyl-N-acetylglucosamine deacetylase (305 aa).

Zn(2+) is bound by residues H79, H238, and D242. The active-site Proton donor is H265.

It belongs to the LpxC family. The cofactor is Zn(2+).

The enzyme catalyses a UDP-3-O-[(3R)-3-hydroxyacyl]-N-acetyl-alpha-D-glucosamine + H2O = a UDP-3-O-[(3R)-3-hydroxyacyl]-alpha-D-glucosamine + acetate. Its pathway is glycolipid biosynthesis; lipid IV(A) biosynthesis; lipid IV(A) from (3R)-3-hydroxytetradecanoyl-[acyl-carrier-protein] and UDP-N-acetyl-alpha-D-glucosamine: step 2/6. Its function is as follows. Catalyzes the hydrolysis of UDP-3-O-myristoyl-N-acetylglucosamine to form UDP-3-O-myristoylglucosamine and acetate, the committed step in lipid A biosynthesis. This is UDP-3-O-acyl-N-acetylglucosamine deacetylase from Salmonella typhi.